The chain runs to 127 residues: Protein LLP homolog (127 aa).

Over residues M1–N21 the composition is skewed to basic residues. A disordered region spans residues M1–K24. Glycyl lysine isopeptide (Lys-Gly) (interchain with G-Cter in SUMO2) cross-links involve residues K65 and K72. Residues R98–K120 show a composition bias toward basic residues. Positions R98–W127 are disordered.

Belongs to the learning-associated protein family. As to quaternary structure, interacts with CTCF, MYO1C and with the transcriptional machinery, including RNA polymerase II and TBP.

Its subcellular location is the nucleus. The protein localises to the nucleolus. The protein resides in the chromosome. Functionally, in hippocampal neurons, regulates dendritic and spine growth and synaptic transmission. In Bos taurus (Bovine), this protein is Protein LLP homolog (LLPH).